Reading from the N-terminus, the 486-residue chain is Inosine-5'-monophosphate dehydrogenase (486 aa).

CBS domains lie at 99 to 154 and 156 to 215; these read IVED…LVKE and MTKE…VRDE. Residues Asp-247 and 294–296 each bind NAD(+); that span reads GIG. Residues Gly-296 and Gly-298 each coordinate K(+). IMP is bound at residue Ser-299. Cys-301 contributes to the K(+) binding site. Catalysis depends on Cys-301, which acts as the Thioimidate intermediate. Residues 334-336, 357-358, and 381-385 each bind IMP; these read DGG, GN, and YRGMG. The Proton acceptor role is filled by Arg-397. IMP is bound at residue Glu-412. Residues Glu-466, Ser-467, and His-468 each contribute to the K(+) site.

Belongs to the IMPDH/GMPR family. In terms of assembly, homotetramer. K(+) serves as cofactor.

The enzyme catalyses IMP + NAD(+) + H2O = XMP + NADH + H(+). It functions in the pathway purine metabolism; XMP biosynthesis via de novo pathway; XMP from IMP: step 1/1. With respect to regulation, mycophenolic acid (MPA) is a non-competitive inhibitor that prevents formation of the closed enzyme conformation by binding to the same site as the amobile flap. In contrast, mizoribine monophosphate (MZP) is a competitive inhibitor that induces the closed conformation. MPA is a potent inhibitor of mammalian IMPDHs but a poor inhibitor of the bacterial enzymes. MZP is a more potent inhibitor of bacterial IMPDH. Functionally, catalyzes the conversion of inosine 5'-phosphate (IMP) to xanthosine 5'-phosphate (XMP), the first committed and rate-limiting step in the de novo synthesis of guanine nucleotides, and therefore plays an important role in the regulation of cell growth. This Pyrococcus horikoshii (strain ATCC 700860 / DSM 12428 / JCM 9974 / NBRC 100139 / OT-3) protein is Inosine-5'-monophosphate dehydrogenase.